The following is a 264-amino-acid chain: S-adenosylmethionine decarboxylase proenzyme (264 aa).

Serine 112 acts as the Schiff-base intermediate with substrate; via pyruvic acid in catalysis. Serine 112 is modified (pyruvic acid (Ser); by autocatalysis). The active-site Proton acceptor; for processing activity is histidine 117. Cysteine 140 functions as the Proton donor; for catalytic activity in the catalytic mechanism.

Belongs to the prokaryotic AdoMetDC family. Type 2 subfamily. Heterooctamer of four alpha and four beta chains arranged as a tetramer of alpha/beta heterodimers. Pyruvate is required as a cofactor. Is synthesized initially as an inactive proenzyme. Formation of the active enzyme involves a self-maturation process in which the active site pyruvoyl group is generated from an internal serine residue via an autocatalytic post-translational modification. Two non-identical subunits are generated from the proenzyme in this reaction, and the pyruvate is formed at the N-terminus of the alpha chain, which is derived from the carboxyl end of the proenzyme. The post-translation cleavage follows an unusual pathway, termed non-hydrolytic serinolysis, in which the side chain hydroxyl group of the serine supplies its oxygen atom to form the C-terminus of the beta chain, while the remainder of the serine residue undergoes an oxidative deamination to produce ammonia and the pyruvoyl group blocking the N-terminus of the alpha chain.

The catalysed reaction is S-adenosyl-L-methionine + H(+) = S-adenosyl 3-(methylsulfanyl)propylamine + CO2. The protein operates within amine and polyamine biosynthesis; S-adenosylmethioninamine biosynthesis; S-adenosylmethioninamine from S-adenosyl-L-methionine: step 1/1. Functionally, catalyzes the decarboxylation of S-adenosylmethionine to S-adenosylmethioninamine (dcAdoMet), the propylamine donor required for the synthesis of the polyamines spermine and spermidine from the diamine putrescine. The sequence is that of S-adenosylmethionine decarboxylase proenzyme from Cronobacter sakazakii (strain ATCC BAA-894) (Enterobacter sakazakii).